Reading from the N-terminus, the 380-residue chain is Cytochrome b (380 aa).

4 consecutive transmembrane segments (helical) span residues 34–54, 78–99, 114–134, and 179–199; these read FGSL…LLAM, WLIR…FLHI, WNTG…GYVL, and FFAL…THLM. 2 residues coordinate heme b: His-84 and His-98. Residues His-183 and His-197 each coordinate heme b. His-202 contributes to the a ubiquinone binding site. The next 4 membrane-spanning stretches (helical) occupy residues 227–247, 289–309, 321–341, and 348–368; these read LKDI…ALFS, LGGV…PFLH, LSQT…WVGS, and FIII…ILFP.

This sequence belongs to the cytochrome b family. As to quaternary structure, the cytochrome bc1 complex contains 11 subunits: 3 respiratory subunits (MT-CYB, CYC1 and UQCRFS1), 2 core proteins (UQCRC1 and UQCRC2) and 6 low-molecular weight proteins (UQCRH/QCR6, UQCRB/QCR7, UQCRQ/QCR8, UQCR10/QCR9, UQCR11/QCR10 and a cleavage product of UQCRFS1). This cytochrome bc1 complex then forms a dimer. The cofactor is heme b.

The protein localises to the mitochondrion inner membrane. Functionally, component of the ubiquinol-cytochrome c reductase complex (complex III or cytochrome b-c1 complex) that is part of the mitochondrial respiratory chain. The b-c1 complex mediates electron transfer from ubiquinol to cytochrome c. Contributes to the generation of a proton gradient across the mitochondrial membrane that is then used for ATP synthesis. The sequence is that of Cytochrome b (MT-CYB) from Tragopan satyra (Satyr tragopan).